We begin with the raw amino-acid sequence, 438 residues long: Enolase (438 aa).

Residues H159 and E168 each coordinate substrate. The Proton donor role is filled by E211. Residues D246, E297, and D322 each contribute to the Mg(2+) site. Residues E297 and D322 each contribute to the substrate site. K347 functions as the Proton acceptor in the catalytic mechanism. Residues 374-377 (SHRS) and K398 each bind substrate.

The protein belongs to the enolase family. As to quaternary structure, homodimer. Requires Mg(2+) as cofactor.

It is found in the cytoplasm. The enzyme catalyses (2R)-2-phosphoglycerate = phosphoenolpyruvate + H2O. Its pathway is carbohydrate degradation; glycolysis; pyruvate from D-glyceraldehyde 3-phosphate: step 4/5. In Cryphonectria parasitica (Chestnut blight fungus), this protein is Enolase (ENO1).